Consider the following 495-residue polypeptide: Glycerol kinase (495 aa).

Thr-11 contributes to the ADP binding site. Residues Thr-11, Thr-12, and Ser-13 each coordinate ATP. Sn-glycerol 3-phosphate is bound at residue Thr-11. Arg-15 contacts ADP. Sn-glycerol 3-phosphate-binding residues include Arg-81, Glu-82, Tyr-133, and Asp-242. The glycerol site is built by Arg-81, Glu-82, Tyr-133, Asp-242, and Gln-243. The ADP site is built by Thr-264 and Gly-307. ATP is bound by residues Thr-264, Gly-307, Gln-311, and Gly-408. The ADP site is built by Gly-408 and Asn-412.

The protein belongs to the FGGY kinase family.

It carries out the reaction glycerol + ATP = sn-glycerol 3-phosphate + ADP + H(+). Its pathway is polyol metabolism; glycerol degradation via glycerol kinase pathway; sn-glycerol 3-phosphate from glycerol: step 1/1. With respect to regulation, inhibited by fructose 1,6-bisphosphate (FBP). Key enzyme in the regulation of glycerol uptake and metabolism. Catalyzes the phosphorylation of glycerol to yield sn-glycerol 3-phosphate. This chain is Glycerol kinase, found in Alkalilimnicola ehrlichii (strain ATCC BAA-1101 / DSM 17681 / MLHE-1).